Here is a 220-residue protein sequence, read N- to C-terminus: U1 small nuclear ribonucleoprotein C (220 aa).

Residues 4–36 (FFCDYCDVYLTHDSISVRKAHNSGRNHLRNVVD) form a Matrin-type zinc finger. The interval 197-220 (PLGGFPAGAPLPGAPPGYGPPGAK) is disordered. A compositionally biased stretch (pro residues) spans 208-220 (PGAPPGYGPPGAK).

This sequence belongs to the U1 small nuclear ribonucleoprotein C family. As to quaternary structure, U1 snRNP is composed of the 7 core Sm proteins B/B', D1, D2, D3, E, F and G that assemble in a heptameric protein ring on the Sm site of the small nuclear RNA to form the core snRNP, and at least 3 U1 snRNP-specific proteins U1-70K, U1-A and U1-C. U1-C interacts with U1 snRNA and the 5' splice-site region of the pre-mRNA.

The protein localises to the nucleus. Its function is as follows. Component of the spliceosomal U1 snRNP, which is essential for recognition of the pre-mRNA 5' splice-site and the subsequent assembly of the spliceosome. U1-C is directly involved in initial 5' splice-site recognition for both constitutive and regulated alternative splicing. The interaction with the 5' splice-site seems to precede base-pairing between the pre-mRNA and the U1 snRNA. Stimulates commitment or early (E) complex formation by stabilizing the base pairing of the 5' end of the U1 snRNA and the 5' splice-site region. This is U1 small nuclear ribonucleoprotein C from Tuber melanosporum (strain Mel28) (Perigord black truffle).